The primary structure comprises 151 residues: MEKEQNKKTSSLNVLAIAGLQPYQKKTDEEYMNEKQMLHFKKILETWKNQLTIEINHTLLYIQDKSTNFPDPIDRAAQEEEFSLELRNRDRSRKLIKKIQETLKKIKDKDFGYCNSCAVEIGIRRLEARPTANLCIDCKTLAEIREKQMAG.

Zn(2+)-binding residues include cysteine 114, cysteine 117, cysteine 135, and cysteine 138. Residues cysteine 114–cysteine 138 form a dksA C4-type zinc finger.

It belongs to the DksA family. As to quaternary structure, interacts directly with the RNA polymerase.

Its subcellular location is the cytoplasm. Functionally, transcription factor that acts by binding directly to the RNA polymerase (RNAP). Required for negative regulation of rRNA expression and positive regulation of several amino acid biosynthesis promoters. Also required for regulation of fis expression. The protein is RNA polymerase-binding transcription factor DksA of Buchnera aphidicola subsp. Schizaphis graminum (strain Sg).